The primary structure comprises 366 residues: Histidinol-phosphate aminotransferase 2 (366 aa).

Residues 1-11 (MQVKDQLSSLQ) show a composition bias toward polar residues. Positions 1 to 21 (MQVKDQLSSLQPYKPGKSPEQ) are disordered. Lys222 carries the post-translational modification N6-(pyridoxal phosphate)lysine.

This sequence belongs to the class-II pyridoxal-phosphate-dependent aminotransferase family. Histidinol-phosphate aminotransferase subfamily. Homodimer. Pyridoxal 5'-phosphate is required as a cofactor.

It carries out the reaction L-histidinol phosphate + 2-oxoglutarate = 3-(imidazol-4-yl)-2-oxopropyl phosphate + L-glutamate. The protein operates within amino-acid biosynthesis; L-histidine biosynthesis; L-histidine from 5-phospho-alpha-D-ribose 1-diphosphate: step 7/9. This chain is Histidinol-phosphate aminotransferase 2, found in Bacillus thuringiensis subsp. konkukian (strain 97-27).